Consider the following 466-residue polypeptide: Ribulose bisphosphate carboxylase large chain (466 aa).

K5 is modified (N6,N6,N6-trimethyllysine). 2 residues coordinate substrate: N114 and T164. The Proton acceptor role is filled by K166. K168 is a substrate binding site. Mg(2+) is bound by residues K192, D194, and E195. K192 carries the post-translational modification N6-carboxylysine. H285 (proton acceptor) is an active-site residue. 3 residues coordinate substrate: R286, H318, and S370.

The protein belongs to the RuBisCO large chain family. Type I subfamily. Heterohexadecamer of 8 large chains and 8 small chains; disulfide-linked. The disulfide link is formed within the large subunit homodimers. The cofactor is Mg(2+). In terms of processing, the disulfide bond which can form in the large chain dimeric partners within the hexadecamer appears to be associated with oxidative stress and protein turnover.

It is found in the plastid. The protein resides in the chloroplast. The catalysed reaction is 2 (2R)-3-phosphoglycerate + 2 H(+) = D-ribulose 1,5-bisphosphate + CO2 + H2O. It catalyses the reaction D-ribulose 1,5-bisphosphate + O2 = 2-phosphoglycolate + (2R)-3-phosphoglycerate + 2 H(+). Functionally, ruBisCO catalyzes two reactions: the carboxylation of D-ribulose 1,5-bisphosphate, the primary event in carbon dioxide fixation, as well as the oxidative fragmentation of the pentose substrate in the photorespiration process. Both reactions occur simultaneously and in competition at the same active site. The protein is Ribulose bisphosphate carboxylase large chain of Hedera helix (English ivy).